A 300-amino-acid polypeptide reads, in one-letter code: Ribosomal protein L11 methyltransferase (300 aa).

Positions 152, 173, 195, and 234 each coordinate S-adenosyl-L-methionine.

This sequence belongs to the methyltransferase superfamily. PrmA family.

It is found in the cytoplasm. The enzyme catalyses L-lysyl-[protein] + 3 S-adenosyl-L-methionine = N(6),N(6),N(6)-trimethyl-L-lysyl-[protein] + 3 S-adenosyl-L-homocysteine + 3 H(+). Its function is as follows. Methylates ribosomal protein L11. The chain is Ribosomal protein L11 methyltransferase from Burkholderia cenocepacia (strain ATCC BAA-245 / DSM 16553 / LMG 16656 / NCTC 13227 / J2315 / CF5610) (Burkholderia cepacia (strain J2315)).